The primary structure comprises 477 residues: Glutamate--tRNA ligase 1 (477 aa).

The 'HIGH' region motif lies at 12 to 22; the sequence is PSPTGALHLGN. The short motif at 253-257 is the 'KMSKS' region element; that stretch reads PLSKR. Lys-256 contacts ATP.

Belongs to the class-I aminoacyl-tRNA synthetase family. Glutamate--tRNA ligase type 1 subfamily. Monomer.

It is found in the cytoplasm. The catalysed reaction is tRNA(Glu) + L-glutamate + ATP = L-glutamyl-tRNA(Glu) + AMP + diphosphate. Catalyzes the attachment of glutamate to tRNA(Glu) in a two-step reaction: glutamate is first activated by ATP to form Glu-AMP and then transferred to the acceptor end of tRNA(Glu). In Halorhodospira halophila (strain DSM 244 / SL1) (Ectothiorhodospira halophila (strain DSM 244 / SL1)), this protein is Glutamate--tRNA ligase 1.